The sequence spans 213 residues: Uracil phosphoribosyltransferase (213 aa).

Residues R78, R103, and 130–138 contribute to the 5-phospho-alpha-D-ribose 1-diphosphate site; that span reads DPMLATGGS. Uracil-binding positions include I193 and 198–200; that span reads GDA. 5-phospho-alpha-D-ribose 1-diphosphate is bound at residue D199.

This sequence belongs to the UPRTase family. Mg(2+) is required as a cofactor.

It catalyses the reaction UMP + diphosphate = 5-phospho-alpha-D-ribose 1-diphosphate + uracil. It participates in pyrimidine metabolism; UMP biosynthesis via salvage pathway; UMP from uracil: step 1/1. Allosterically activated by GTP. Catalyzes the conversion of uracil and 5-phospho-alpha-D-ribose 1-diphosphate (PRPP) to UMP and diphosphate. The chain is Uracil phosphoribosyltransferase from Bordetella pertussis (strain Tohama I / ATCC BAA-589 / NCTC 13251).